We begin with the raw amino-acid sequence, 159 residues long: Protein SPA, chloroplastic (159 aa).

The N-terminal 47 residues, 1–47 (MLTAPSLSRFKSPFISSPLKLPTLSSSFFTQKFHQTCRRRNSYPCIK), are a transit peptide targeting the chloroplast. The helical transmembrane segment at 56-76 (VIAITVGVLSVAIGVGIPVFY) threads the bilayer. Positions 85–145 (KRENTQPCFP…TCTTCQGSGI (61 aa)) are CR-type-like. CXXCXGXG motif repeat units lie at residues 92 to 99 (CFPCTGTG), 103 to 110 (CRFCMGTG), 126 to 133 (CINCDGAG), and 137 to 144 (CTTCQGSG).

As to expression, expressed in source leaves. Lower levels of expression in fruits and stems.

It localises to the plastid. The protein localises to the chloroplast thylakoid membrane. Its function is as follows. Participates in determining harvest index (HI) by affecting source-sink carbon distribution. Up-regulates the conversion of fixed carbon to exportable sugars. In Solanum lycopersicum (Tomato), this protein is Protein SPA, chloroplastic.